The primary structure comprises 388 residues: Nitric oxide reductase FlRd-NAD(+) reductase (388 aa).

This sequence belongs to the FAD-dependent oxidoreductase family. FAD serves as cofactor.

Its subcellular location is the cytoplasm. The enzyme catalyses 2 reduced [nitric oxide reductase rubredoxin domain] + NAD(+) + H(+) = 2 oxidized [nitric oxide reductase rubredoxin domain] + NADH. The protein operates within nitrogen metabolism; nitric oxide reduction. Its function is as follows. One of at least two accessory proteins for anaerobic nitric oxide (NO) reductase. Reduces the rubredoxin moiety of NO reductase. This chain is Nitric oxide reductase FlRd-NAD(+) reductase, found in Aeromonas hydrophila subsp. hydrophila (strain ATCC 7966 / DSM 30187 / BCRC 13018 / CCUG 14551 / JCM 1027 / KCTC 2358 / NCIMB 9240 / NCTC 8049).